We begin with the raw amino-acid sequence, 157 residues long: Protein-export protein SecB (157 aa).

The protein belongs to the SecB family. Homotetramer, a dimer of dimers. One homotetramer interacts with 1 SecA dimer.

It is found in the cytoplasm. One of the proteins required for the normal export of preproteins out of the cell cytoplasm. It is a molecular chaperone that binds to a subset of precursor proteins, maintaining them in a translocation-competent state. It also specifically binds to its receptor SecA. This Methylobacillus flagellatus (strain ATCC 51484 / DSM 6875 / VKM B-1610 / KT) protein is Protein-export protein SecB.